The chain runs to 333 residues: Glyceraldehyde-3-phosphate dehydrogenase (333 aa).

NAD(+) is bound by residues 11-12, Asp-35, and Thr-121; that span reads RI. Residues 151-153 and Thr-182 each bind D-glyceraldehyde 3-phosphate; that span reads SCT. The active-site Nucleophile is Cys-152. Asn-183 is a binding site for NAD(+). Residues Arg-197, 210 to 211, and Arg-233 each bind D-glyceraldehyde 3-phosphate; that span reads TG. Asn-315 lines the NAD(+) pocket.

It belongs to the glyceraldehyde-3-phosphate dehydrogenase family. As to quaternary structure, homotetramer.

It localises to the cytoplasm. The catalysed reaction is D-glyceraldehyde 3-phosphate + phosphate + NAD(+) = (2R)-3-phospho-glyceroyl phosphate + NADH + H(+). It functions in the pathway carbohydrate degradation; glycolysis; pyruvate from D-glyceraldehyde 3-phosphate: step 1/5. In terms of biological role, catalyzes the oxidative phosphorylation of glyceraldehyde 3-phosphate (G3P) to 1,3-bisphosphoglycerate (BPG) using the cofactor NAD. The first reaction step involves the formation of a hemiacetal intermediate between G3P and a cysteine residue, and this hemiacetal intermediate is then oxidized to a thioester, with concomitant reduction of NAD to NADH. The reduced NADH is then exchanged with the second NAD, and the thioester is attacked by a nucleophilic inorganic phosphate to produce BPG. In Thermotoga maritima (strain ATCC 43589 / DSM 3109 / JCM 10099 / NBRC 100826 / MSB8), this protein is Glyceraldehyde-3-phosphate dehydrogenase (gap).